We begin with the raw amino-acid sequence, 151 residues long: Neuroglobin (151 aa).

The Globin domain occupies 1-149 (MERPEHELIR…VVQAMSRGWN (149 aa)). 2 residues coordinate heme b: histidine 64 and histidine 96.

This sequence belongs to the globin family. In terms of assembly, monomer. Homodimer and homotetramer; disulfide-linked. Mainly monomeric but also detected as part of homodimers and homotetramers. Interacts with 14-3-3 proteins; regulates the phosphorylation of NGB. Could interact (ferrous form) with G-alpha(i) proteins (GTP-bound form). Phosphorylated during hypoxia by ERK1/ERK2. Phosphorylation regulates the heme pocket hexacoordination preventing the association of His-64 with the heme metal center. Thereby, promotes the access of dioxygen and nitrite to the heme and stimulates the nitrite reductase activity. Phosphorylation during hypoxia is stabilized by 14-3-3 proteins.

The protein resides in the cytoplasm. The protein localises to the cytosol. Its subcellular location is the mitochondrion matrix. It carries out the reaction Fe(III)-heme b-[protein] + nitric oxide + H2O = Fe(II)-heme b-[protein] + nitrite + 2 H(+). Functionally, monomeric globin with a bis-histidyl six-coordinate heme-iron atom through which it can bind dioxygen, carbon monoxide and nitric oxide. Could help transport oxygen and increase its availability to the metabolically active neuronal tissues, though its low quantity in tissues as well as its high affinity for dioxygen, which may limit its oxygen-releasing ability, argue against it. The ferrous/deoxygenated form exhibits a nitrite reductase activity and it could produce nitric oxide which in turn inhibits cellular respiration in response to hypoxia. In its ferrous/deoxygenated state, it may also exhibit GDI (Guanine nucleotide Dissociation Inhibitor) activity toward heterotrimeric G-alpha proteins, thereby regulating signal transduction to facilitate neuroprotective responses in the wake of hypoxia and associated oxidative stress. The sequence is that of Neuroglobin from Sus scrofa (Pig).